The following is a 204-amino-acid chain: Leucyl/phenylalanyl-tRNA--protein transferase (204 aa).

The protein belongs to the L/F-transferase family.

Its subcellular location is the cytoplasm. It catalyses the reaction N-terminal L-lysyl-[protein] + L-leucyl-tRNA(Leu) = N-terminal L-leucyl-L-lysyl-[protein] + tRNA(Leu) + H(+). The catalysed reaction is N-terminal L-arginyl-[protein] + L-leucyl-tRNA(Leu) = N-terminal L-leucyl-L-arginyl-[protein] + tRNA(Leu) + H(+). It carries out the reaction L-phenylalanyl-tRNA(Phe) + an N-terminal L-alpha-aminoacyl-[protein] = an N-terminal L-phenylalanyl-L-alpha-aminoacyl-[protein] + tRNA(Phe). Its function is as follows. Functions in the N-end rule pathway of protein degradation where it conjugates Leu, Phe and, less efficiently, Met from aminoacyl-tRNAs to the N-termini of proteins containing an N-terminal arginine or lysine. The polypeptide is Leucyl/phenylalanyl-tRNA--protein transferase (Agrobacterium fabrum (strain C58 / ATCC 33970) (Agrobacterium tumefaciens (strain C58))).